We begin with the raw amino-acid sequence, 318 residues long: Biotin synthase (318 aa).

One can recognise a Radical SAM core domain in the interval 40 to 260; that stretch reads DDIQKASLLS…VATARIIMPL (221 aa). [4Fe-4S] cluster-binding residues include Cys55, Cys59, and Cys62. [2Fe-2S] cluster contacts are provided by Cys100, Cys132, Cys192, and Arg264.

Belongs to the radical SAM superfamily. Biotin synthase family. Homodimer. Requires [4Fe-4S] cluster as cofactor. It depends on [2Fe-2S] cluster as a cofactor.

It catalyses the reaction (4R,5S)-dethiobiotin + (sulfur carrier)-SH + 2 reduced [2Fe-2S]-[ferredoxin] + 2 S-adenosyl-L-methionine = (sulfur carrier)-H + biotin + 2 5'-deoxyadenosine + 2 L-methionine + 2 oxidized [2Fe-2S]-[ferredoxin]. Its pathway is cofactor biosynthesis; biotin biosynthesis; biotin from 7,8-diaminononanoate: step 2/2. Its function is as follows. Catalyzes the conversion of dethiobiotin (DTB) to biotin by the insertion of a sulfur atom into dethiobiotin via a radical-based mechanism. This Ruegeria pomeroyi (strain ATCC 700808 / DSM 15171 / DSS-3) (Silicibacter pomeroyi) protein is Biotin synthase.